The sequence spans 197 residues: GTP cyclohydrolase-2 (197 aa).

A GTP-binding site is contributed by 50–54 (RIHSE). Zn(2+)-binding residues include Cys-55, Cys-66, and Cys-68. GTP is bound by residues Gln-71, 93-95 (EGR), and Thr-115. Residue Asp-127 is the Proton acceptor of the active site. Residue Arg-129 is the Nucleophile of the active site. GTP contacts are provided by Thr-150 and Lys-155.

Belongs to the GTP cyclohydrolase II family. Requires Zn(2+) as cofactor.

The catalysed reaction is GTP + 4 H2O = 2,5-diamino-6-hydroxy-4-(5-phosphoribosylamino)-pyrimidine + formate + 2 phosphate + 3 H(+). The protein operates within cofactor biosynthesis; riboflavin biosynthesis; 5-amino-6-(D-ribitylamino)uracil from GTP: step 1/4. Catalyzes the conversion of GTP to 2,5-diamino-6-ribosylamino-4(3H)-pyrimidinone 5'-phosphate (DARP), formate and pyrophosphate. The polypeptide is GTP cyclohydrolase-2 (Neisseria meningitidis serogroup C (strain 053442)).